A 603-amino-acid polypeptide reads, in one-letter code: Terpenoid synthase 25 (603 aa).

The Mg(2+) site is built by Asp356, Asp360, Asn500, Thr504, and Glu508. The DDXXD motif motif lies at 356-360; that stretch reads DDTCD.

Belongs to the terpene synthase family. Tpsa subfamily. It depends on Mg(2+) as a cofactor. The cofactor is Mn(2+). As to expression, predominantly expressed in roots but also in flowers.

The protein resides in the cytoplasm. It participates in secondary metabolite biosynthesis; terpenoid biosynthesis. Functionally, involved in terpene biosynthesis in roots. Possesses sesquiterpene (C15) synthase activity in vitro. Does not seem to be involved in diterpene (C20) biosynthesis. In Arabidopsis thaliana (Mouse-ear cress), this protein is Terpenoid synthase 25.